A 591-amino-acid chain; its full sequence is Aspartate--tRNA(Asp/Asn) ligase (591 aa).

Residue E174 coordinates L-aspartate. The tract at residues 198 to 201 is aspartate; sequence QLFK. An L-aspartate-binding site is contributed by R220. Residues 220-222 and Q229 contribute to the ATP site; that span reads RDE. Residue H450 participates in L-aspartate binding. Position 483 (E483) interacts with ATP. R490 is a binding site for L-aspartate. 535–538 contacts ATP; it reads GLDR.

It belongs to the class-II aminoacyl-tRNA synthetase family. Type 1 subfamily. Homodimer.

The protein resides in the cytoplasm. It carries out the reaction tRNA(Asx) + L-aspartate + ATP = L-aspartyl-tRNA(Asx) + AMP + diphosphate. Aspartyl-tRNA synthetase with relaxed tRNA specificity since it is able to aspartylate not only its cognate tRNA(Asp) but also tRNA(Asn). Reaction proceeds in two steps: L-aspartate is first activated by ATP to form Asp-AMP and then transferred to the acceptor end of tRNA(Asp/Asn). In Pseudomonas putida (strain GB-1), this protein is Aspartate--tRNA(Asp/Asn) ligase.